A 339-amino-acid polypeptide reads, in one-letter code: UDP-glucose 4-epimerase (339 aa).

NAD(+)-binding positions include 12-13 (FI), 32-37 (DNLCNS), 59-60 (DI), 81-85 (FAGLK), Asn100, Ser125, Tyr150, Lys154, and Phe179. Positions 125 and 150 each coordinate substrate. Tyr150 acts as the Proton acceptor in catalysis. Substrate-binding positions include Asn180, 200-201 (NL), 217-219 (AVF), Arg232, and 293-296 (RAGD).

It belongs to the NAD(P)-dependent epimerase/dehydratase family. As to quaternary structure, homodimer. NAD(+) is required as a cofactor.

It catalyses the reaction UDP-alpha-D-glucose = UDP-alpha-D-galactose. The protein operates within carbohydrate metabolism; galactose metabolism. Functionally, involved in the metabolism of galactose. Plays an essential role in the incorporation of galactose into meningococcal lipopolysaccharide surface molecules, which are important for pathogenesis. Catalyzes the conversion of UDP-galactose (UDP-Gal) to UDP-glucose (UDP-Glc) through a mechanism involving the transient reduction of NAD. The polypeptide is UDP-glucose 4-epimerase (galE) (Neisseria meningitidis serogroup C).